Reading from the N-terminus, the 141-residue chain is 6,7-dimethyl-8-ribityllumazine synthase (141 aa).

5-amino-6-(D-ribitylamino)uracil is bound by residues F14, 46–48 (VFD), and 70–72 (CVI). 75–76 (ET) is a (2S)-2-hydroxy-3-oxobutyl phosphate binding site. H78 (proton donor) is an active-site residue. Residue L103 participates in 5-amino-6-(D-ribitylamino)uracil binding. R118 is a (2S)-2-hydroxy-3-oxobutyl phosphate binding site.

As to quaternary structure, forms an icosahedral capsid composed of 60 subunits, arranged as a dodecamer of pentamers.

It catalyses the reaction (2S)-2-hydroxy-3-oxobutyl phosphate + 5-amino-6-(D-ribitylamino)uracil = 6,7-dimethyl-8-(1-D-ribityl)lumazine + phosphate + 2 H2O + H(+). It functions in the pathway cofactor biosynthesis; riboflavin biosynthesis; riboflavin from 2-hydroxy-3-oxobutyl phosphate and 5-amino-6-(D-ribitylamino)uracil: step 1/2. In terms of biological role, catalyzes the formation of 6,7-dimethyl-8-ribityllumazine by condensation of 5-amino-6-(D-ribitylamino)uracil with 3,4-dihydroxy-2-butanone 4-phosphate. This is the penultimate step in the biosynthesis of riboflavin. This Methanocaldococcus jannaschii (strain ATCC 43067 / DSM 2661 / JAL-1 / JCM 10045 / NBRC 100440) (Methanococcus jannaschii) protein is 6,7-dimethyl-8-ribityllumazine synthase (ribH).